The chain runs to 328 residues: tRNA uridine(34) hydroxylase (328 aa).

The 95-residue stretch at 130–224 folds into the Rhodanese domain; the sequence is LDEDTVVLDT…YGKDPEVQGE (95 aa). The active-site Cysteine persulfide intermediate is the Cys184.

Belongs to the TrhO family.

It carries out the reaction uridine(34) in tRNA + AH2 + O2 = 5-hydroxyuridine(34) in tRNA + A + H2O. In terms of biological role, catalyzes oxygen-dependent 5-hydroxyuridine (ho5U) modification at position 34 in tRNAs. This Streptococcus sanguinis (strain SK36) protein is tRNA uridine(34) hydroxylase.